The following is a 1158-amino-acid chain: ATP-dependent helicase/deoxyribonuclease subunit B (1158 aa).

Positions 1–275 constitute a UvrD-like helicase ATP-binding domain; the sequence is MTLHAYLGRA…QYFNQLYRFN (275 aa). Residue 8-15 participates in ATP binding; sequence GRAGTGKS. A UvrD-like helicase C-terminal domain is found at 269-583; that stretch reads NQLYRFNNQD…SIGTMDLAKV (315 aa). Residues cysteine 784, cysteine 1112, cysteine 1115, and cysteine 1121 each contribute to the [4Fe-4S] cluster site.

Belongs to the helicase family. AddB/RexB type 1 subfamily. Heterodimer of AddA and AddB. Requires Mg(2+) as cofactor. [4Fe-4S] cluster serves as cofactor.

Functionally, the heterodimer acts as both an ATP-dependent DNA helicase and an ATP-dependent, dual-direction single-stranded exonuclease. Recognizes the chi site generating a DNA molecule suitable for the initiation of homologous recombination. The AddB subunit has 5' -&gt; 3' nuclease activity but not helicase activity. The chain is ATP-dependent helicase/deoxyribonuclease subunit B from Staphylococcus aureus (strain MW2).